The sequence spans 340 residues: MQLKDFDFDLPASLIAQHPIKNRTDSRLLIKRSSIIDIQFNQIGDFFQSGDLLIMNNTKVIPARLFGTKETGGKVEIMIERILDENQVLAMIKASRAPKIGSCIFLENDVNIIVYQKDNGFYTLIFETDSLFDLLNNIGHTPLPPYIKRTNNVQDLSRYQTVYAQKDGAVAAPTAGLHFDDSLLAQLKIQGIDHLFVTLHIGSGTFTPIRTDNIKNHVMHSEIFEISQVTVDRINLTKANGGRIIAVGTTTVRVLESSLKNGKLIAQNGETDIFIYPSYQFRIVDSLITNFHLPKSSLLMLVSAFIGRDKMLELYKHAIEQKYKFLSYGDAMFLEKNNDL.

It belongs to the QueA family. As to quaternary structure, monomer.

It is found in the cytoplasm. The catalysed reaction is 7-aminomethyl-7-carbaguanosine(34) in tRNA + S-adenosyl-L-methionine = epoxyqueuosine(34) in tRNA + adenine + L-methionine + 2 H(+). It participates in tRNA modification; tRNA-queuosine biosynthesis. Transfers and isomerizes the ribose moiety from AdoMet to the 7-aminomethyl group of 7-deazaguanine (preQ1-tRNA) to give epoxyqueuosine (oQ-tRNA). The chain is S-adenosylmethionine:tRNA ribosyltransferase-isomerase from Vesicomyosocius okutanii subsp. Calyptogena okutanii (strain HA).